We begin with the raw amino-acid sequence, 300 residues long: Acetaldehyde dehydrogenase (300 aa).

Residue 11 to 14 coordinates NAD(+); sequence SGNI. The active-site Acyl-thioester intermediate is the cysteine 129. Residues 160-168 and asparagine 271 contribute to the NAD(+) site; that span reads SVGPGTRQN.

The protein belongs to the acetaldehyde dehydrogenase family.

The catalysed reaction is acetaldehyde + NAD(+) + CoA = acetyl-CoA + NADH + H(+). The chain is Acetaldehyde dehydrogenase (mhpF) from Pseudoalteromonas translucida (strain TAC 125).